We begin with the raw amino-acid sequence, 373 residues long: Chaperone protein DnaJ (373 aa).

One can recognise a J domain in the interval 4-69; the sequence is SYYEILEITQ…EKRAIYDRYG (66 aa). Residues 135 to 212 form a CR-type zinc finger; sequence GCKKNIDFTY…CKGLGYNESK (78 aa). The Zn(2+) site is built by Cys148, Cys151, Cys164, Cys167, Cys186, Cys189, Cys200, and Cys203. 4 CXXCXGXG motif repeats span residues 148 to 155, 164 to 171, 186 to 193, and 200 to 207; these read CKTCNGTG, CPKCQGRG, CPDCQGIG, and CSDCKGLG.

This sequence belongs to the DnaJ family. In terms of assembly, homodimer. It depends on Zn(2+) as a cofactor.

It localises to the cytoplasm. Functionally, participates actively in the response to hyperosmotic and heat shock by preventing the aggregation of stress-denatured proteins and by disaggregating proteins, also in an autonomous, DnaK-independent fashion. Unfolded proteins bind initially to DnaJ; upon interaction with the DnaJ-bound protein, DnaK hydrolyzes its bound ATP, resulting in the formation of a stable complex. GrpE releases ADP from DnaK; ATP binding to DnaK triggers the release of the substrate protein, thus completing the reaction cycle. Several rounds of ATP-dependent interactions between DnaJ, DnaK and GrpE are required for fully efficient folding. Also involved, together with DnaK and GrpE, in the DNA replication of plasmids through activation of initiation proteins. The polypeptide is Chaperone protein DnaJ (Campylobacter jejuni (strain RM1221)).